The following is a 324-amino-acid chain: Glutathione synthetase (324 aa).

One can recognise an ATP-grasp domain in the interval 133 to 317 (KMYALQFTKA…LAHQVIQWVE (185 aa)). Position 159-215 (159-215 (VEAKGATVLKPLGNKAGEGILFLQAGDRNFNSIVELSTQQGRLPVMVQTYLPEAKEG)) interacts with ATP. Mg(2+) is bound by residues Glu-288 and Asn-290.

Belongs to the prokaryotic GSH synthase family. The cofactor is Mg(2+). Mn(2+) is required as a cofactor.

The catalysed reaction is gamma-L-glutamyl-L-cysteine + glycine + ATP = glutathione + ADP + phosphate + H(+). The protein operates within sulfur metabolism; glutathione biosynthesis; glutathione from L-cysteine and L-glutamate: step 2/2. In Nostoc sp. (strain PCC 7120 / SAG 25.82 / UTEX 2576), this protein is Glutathione synthetase.